The chain runs to 1345 residues: DNA-directed RNA polymerase subunit beta' (1345 aa).

Cys-60, Cys-62, Cys-75, and Cys-78 together coordinate Zn(2+). Positions 536, 538, and 540 each coordinate Mg(2+). Cys-895, Cys-974, Cys-981, and Cys-984 together coordinate Zn(2+).

This sequence belongs to the RNA polymerase beta' chain family. As to quaternary structure, the RNAP catalytic core consists of 2 alpha, 1 beta, 1 beta' and 1 omega subunit. When a sigma factor is associated with the core the holoenzyme is formed, which can initiate transcription. It depends on Mg(2+) as a cofactor. Requires Zn(2+) as cofactor.

It carries out the reaction RNA(n) + a ribonucleoside 5'-triphosphate = RNA(n+1) + diphosphate. In terms of biological role, DNA-dependent RNA polymerase catalyzes the transcription of DNA into RNA using the four ribonucleoside triphosphates as substrates. The protein is DNA-directed RNA polymerase subunit beta' of Bifidobacterium longum (strain DJO10A).